Reading from the N-terminus, the 228-residue chain is Trichome differentiation protein GL1 (228 aa).

2 HTH myb-type domains span residues 11–63 and 64–118; these read NQEY…MNYL and SPNV…SKKL. 2 DNA-binding regions (H-T-H motif) span residues 39–63 and 91–114; these read WNRI…MNYL and WSLI…NTHL.

As to quaternary structure, homodimer and heterodimer with MYB82. Interacts directly with GL3 and BHLH2. Part of a complex made of GL1, GL3 or BHLH2, and TTG1. Also interacts with BHLH2/EGL3/MYC146 and BHLH12/MYC1. Interacts with MYB82. In terms of tissue distribution, expressed in leaves, stems and flowers. Expressed in trichome cells and in leaf primordia.

Its subcellular location is the nucleus. Transcription activator, when associated with BHLH2/EGL3/MYC146 or BHLH12/MYC1. Involved in epidermal cell fate specification in leaves. Together with TTG1 and GL3, promotes trichome formation and endoreplication. Regulates the production of a signal that induces hair (trichome) precursor cells on leaf primordia to differentiate. Binds to the WER-binding sites (WBS) promoter regions and activates the transcription of target genes. In Arabidopsis thaliana (Mouse-ear cress), this protein is Trichome differentiation protein GL1.